The primary structure comprises 539 residues: Neutral amino acid transporter B(0) (539 aa).

The residue at position 1 (Met1) is an N-acetylmethionine. The Cytoplasmic segment spans residues 1 to 52; that stretch reads MVADPPKGDPKGYAAAEPTANGVSMLVPIEDVGSLKGGRCGSGDQVRRCLRA. The chain crosses the membrane as a helical span at residues 53 to 82; it reads NLLVLLTVVAVVAGVALGLGVSGAGGAFAL. The Extracellular portion of the chain corresponds to 83–95; sequence GPARLEAFSFPGE. A helical transmembrane segment spans residues 96 to 117; it reads LLLRLLKMIILPLVVCSLIGGA. The Cytoplasmic segment spans residues 118 to 131; that stretch reads ASLDPSALGRLGAW. The helical transmembrane segment at 132 to 154 threads the bilayer; that stretch reads ALLFFLVTTLLASALGVGLALAL. At 155-223 the chain is on the extracellular side; the sequence is QPGAAFAAIN…GTLVKVPTGG (69 aa). Residues Asn164 and Asn213 are each glycosylated (N-linked (GlcNAc...) asparagine). Residues 224–247 form a helical membrane-spanning segment; the sequence is EVEGMNILGLVVFAIIFGVALRKL. Topologically, residues 248-256 are cytoplasmic; sequence GPEGELLIR. A helical membrane pass occupies residues 257–284; it reads FFNSFNDATMVLVSWIMWYAPVGILFLV. The Extracellular segment spans residues 285 to 305; the sequence is AGKIVEMENVGLLFASLGKYI. The helical transmembrane segment at 306–327 threads the bilayer; the sequence is LCCLLGHAIHGLLTLPLIYFLF. Over 328–332 the chain is Cytoplasmic; the sequence is ARKNP. Residues 333-363 constitute an intramembrane region (discontinuously helical); it reads YRFLWGIMTPLATAFGTSSSSATLPLMMKCV. The Cytoplasmic segment spans residues 364 to 372; it reads EEKNGVARH. The helical transmembrane segment at 373–399 threads the bilayer; sequence ISRFILPIGATVNMDGAALFQCVAAVF. 3 residues coordinate Na(+): Gly381, Thr383, and Asn385. The Extracellular portion of the chain corresponds to 400-412; sequence IAQLNHRSLDFVK. The discontinuously helical intramembrane region spans 413 to 446; it reads IITILVTATASSVGAAGIPSGGVLTLAIILEAVN. Residues 447–459 are Extracellular-facing; sequence LPVHDISLILAVD. A helical membrane pass occupies residues 460-481; it reads WLVDRSCTVLNVEGDAFGAGLL. Positions 470 and 474 each coordinate Na(+). The Cytoplasmic portion of the chain corresponds to 482 to 539; the sequence is QSYLDRTENCNSVPELIQVKSEMPLAALPVPGEEGNPLLKGCPGPAGDADTCEKESVM. A phosphoserine mark is found at Ser493, Ser502, and Ser537. Positions 518 to 539 are disordered; it reads PLLKGCPGPAGDADTCEKESVM.

It belongs to the dicarboxylate/amino acid:cation symporter (DAACS) (TC 2.A.23) family. SLC1A5 subfamily. As to quaternary structure, homotrimer.

Its subcellular location is the cell membrane. It is found in the melanosome. The enzyme catalyses L-glutamine(out) + L-serine(in) + Na(+)(out) = L-glutamine(in) + L-serine(out) + Na(+)(in). It catalyses the reaction L-glutamine(in) + L-serine(out) + Na(+)(out) = L-glutamine(out) + L-serine(in) + Na(+)(in). It carries out the reaction L-threonine(in) + L-glutamine(out) + Na(+)(out) = L-threonine(out) + L-glutamine(in) + Na(+)(in). The catalysed reaction is L-threonine(out) + L-glutamine(in) + Na(+)(out) = L-threonine(in) + L-glutamine(out) + Na(+)(in). The enzyme catalyses L-asparagine(in) + L-glutamine(out) + Na(+)(out) = L-asparagine(out) + L-glutamine(in) + Na(+)(in). It catalyses the reaction L-asparagine(out) + L-glutamine(in) + Na(+)(out) = L-asparagine(in) + L-glutamine(out) + Na(+)(in). It carries out the reaction L-glutamine(in) + L-alanine(out) + Na(+)(out) = L-glutamine(out) + L-alanine(in) + Na(+)(in). The catalysed reaction is L-valine(out) + L-glutamine(in) + Na(+)(out) = L-valine(in) + L-glutamine(out) + Na(+)(in). The enzyme catalyses L-glutamine(in) + L-methionine(out) + Na(+)(out) = L-glutamine(out) + L-methionine(in) + Na(+)(in). It catalyses the reaction L-glutamine(in) + L-glutamate(out) + Na(+)(out) + H(+)(out) = L-glutamine(out) + L-glutamate(in) + Na(+)(in) + H(+)(in). It carries out the reaction D-serine(in) + L-glutamine(out) + Na(+)(out) = D-serine(out) + L-glutamine(in) + Na(+)(in). The catalysed reaction is D-serine(in) + L-alanine(out) + Na(+)(out) = D-serine(out) + L-alanine(in) + Na(+)(in). The enzyme catalyses nitrate(in) = nitrate(out). It catalyses the reaction iodide(out) = iodide(in). It carries out the reaction thiocyanate(in) = thiocyanate(out). In terms of biological role, sodium-coupled antiporter of neutral amino acids. In a tri-substrate transport cycle, exchanges neutral amino acids between the extracellular and intracellular compartments, coupled to the inward cotransport of at least one sodium ion. The preferred substrate is the essential amino acid L-glutamine, a precursor for biosynthesis of proteins, nucleotides and amine sugars as well as an alternative fuel for mitochondrial oxidative phosphorylation. Exchanges L-glutamine with other neutral amino acids such as L-serine, L-threonine and L-asparagine in a bidirectional way. Provides L-glutamine to proliferating stem and activated cells driving the metabolic switch toward cell differentiation. The transport cycle is usually pH-independent, with the exception of L-glutamate. Transports extracellular L-glutamate coupled to the cotransport of one proton and one sodium ion in exchange for intracellular L-glutamine counter-ion. May provide for L-glutamate uptake in glial cells regulating glutamine/glutamate cycle in the nervous system. Can transport D-amino acids. Mediates D-serine release from the retinal glia potentially affecting NMDA receptor function in retinal neurons. Displays sodium- and amino acid-dependent but uncoupled channel-like anion conductance with a preference SCN(-) &gt;&gt; NO3(-) &gt; I(-) &gt; Cl(-). Through binding of the fusogenic protein syncytin-1/ERVW-1 may mediate trophoblasts syncytialization, the spontaneous fusion of their plasma membranes, an essential process in placental development. In Bos taurus (Bovine), this protein is Neutral amino acid transporter B(0) (SLC1A5).